A 427-amino-acid chain; its full sequence is MSILSERQKDDLNKSIAEYLYAQDLTEIADSLCARLSLDYKSEPNSKYAGLLEKKWVSVIRLQKKLIESENRYTALQEDIAAGPARRRDAQVDWLPTAPARYTLTSHRAPITRVAFHPTFSLLASASEDTTVKIWDWETGSFERTLKGHTREVWGVDFDSKGSFLATCSSDLSIKVWDTQQWDNAGYSGKTLRGHEHTVSTVKFLPGDDLIASASRDKTIRIWEVATTFCIRTITGHEDWVRMTVPSTDGTLLGSCSSDNTARVWDPTSGVMKMEFRGHGHIVEVIAFAPLASYAAIRELAGLKAATKAPGAYIATGSRDKTVKIWDVHSGQELRTVSGHNDWIRGLVFHPSGKHLLSASDDKTIRVWELSTGRCMXVVEAHSHFITCLAWGPPVSAVARVELPRTPFCGDPKPIASRIMEEFNPRP.

One can recognise a LisH domain in the interval 8–40 (QKDDLNKSIAEYLYAQDLTEIADSLCARLSLDY). The stretch at 58 to 82 (SVIRLQKKLIESENRYTALQEDIAA) forms a coiled coil. 7 WD repeats span residues 106-147 (SHRA…RTLK), 149-187 (HTREVWGVDFDSKGSFLATCSSDLSIKVWDTQQWDNAGY), 194-233 (GHEHTVSTVKFLPGDDLIASASRDKTIRIWEVATTFCIRT), 236-275 (GHEDWVRMTVPSTDGTLLGSCSSDNTARVWDPTSGVMKME), 278-336 (GHGH…ELRT), 339-378 (GHNDWIRGLVFHPSGKHLLSASDDKTIRVWELSTGRCMXV), and 381-420 (AHSHFITCLAWGPPVSAVARVELPRTPFCGDPKPIASRIM).

This sequence belongs to the WD repeat LIS1/nudF family. In terms of assembly, self-associates. Interacts with NDL1 and dynein.

The protein resides in the cytoplasm. It localises to the cytoskeleton. The protein localises to the spindle pole. In terms of biological role, positively regulates the activity of the minus-end directed microtubule motor protein dynein. May enhance dynein-mediated microtubule sliding by targeting dynein to the microtubule plus end. Required for nuclear migration during vegetative growth as well as development. Required for retrograde early endosome (EE) transport from the hyphal tip. Required for localization of dynein to the mitotic spindle poles. Recruits additional proteins to the dynein complex at SPBs. This chain is Nuclear distribution protein PAC1-2, found in Postia placenta (strain ATCC 44394 / Madison 698-R) (Brown rot fungus).